We begin with the raw amino-acid sequence, 271 residues long: MASEFKKKLFWRAVVAEFLAMILFIFISIGSALGFHYPIKSNQTTGAVQDNVKVSLAFGLSIATLAQSVGHISGAHLNPAVTLGLLLSCQISVLRAIMYIIAQCVGAIVATAILSGITSSLPDNSLGLNALAPGVNSGQGLGIEIIGTLQLVLCVLATTDRRRRDLGGSGPLAIGFSVALGHLLAIDYTGCGINPARSFGSSVITHNFQDHWIFWVGPFIGAALAVLIYDFILAPRSSDLTDRVKVWTSGQVEEYDLDADDINSRVEMKPK.

At 1-11 (MASEFKKKLFW) the chain is on the cytoplasmic side. A helical transmembrane segment spans residues 12-29 (RAVVAEFLAMILFIFISI). Topologically, residues 30-48 (GSALGFHYPIKSNQTTGAV) are extracellular. Asn42 carries N-linked (GlcNAc...) asparagine glycosylation. The chain crosses the membrane as a helical span at residues 49–67 (QDNVKVSLAFGLSIATLAQ). Residues 68–70 (SVG) lie on the Cytoplasmic side of the membrane. Residues 71 to 84 (HISGAHLNPAVTLG) lie within the membrane without spanning it. Residues 78–80 (NPA) carry the NPA 1 motif. At 85–92 (LLLSCQIS) the chain is on the cytoplasmic side. The helical transmembrane segment at 93–111 (VLRAIMYIIAQCVGAIVAT) threads the bilayer. Over 112–135 (AILSGITSSLPDNSLGLNALAPGV) the chain is Extracellular. Residues 136-155 (NSGQGLGIEIIGTLQLVLCV) form a helical membrane-spanning segment. Residues 156–165 (LATTDRRRRD) are Cytoplasmic-facing. The helical transmembrane segment at 166 to 183 (LGGSGPLAIGFSVALGHL) threads the bilayer. The Extracellular segment spans residues 184–188 (LAIDY). The stretch at 189 to 201 (TGCGINPARSFGS) is an intramembrane region. The NPA 2 motif lies at 194-196 (NPA). The Extracellular portion of the chain corresponds to 202–208 (SVITHNF). The chain crosses the membrane as a helical span at residues 209–226 (QDHWIFWVGPFIGAALAV). Topologically, residues 227-271 (LIYDFILAPRSSDLTDRVKVWTSGQVEEYDLDADDINSRVEMKPK) are cytoplasmic. Ser249 is subject to Phosphoserine. Tyr255 is modified (phosphotyrosine). At Ser264 the chain carries Phosphoserine.

This sequence belongs to the MIP/aquaporin (TC 1.A.8) family. Homotetramer; each monomer provides an independent water pore. Component of the ankyrin-1 complex in the erythrocyte, composed of ANK1, RHCE, RHAG, SLC4A1, EPB42, GYPA, GYPB and AQP1. Interacts with EPHB2; involved in endolymph production in the inner ear. Identified in a complex with STOM. Interacts (via the N-terminal) with ANK1 (via ANK 1-5 repeats). Interacts (via the C-terminal) with EPB42.

The protein localises to the cell membrane. It carries out the reaction H2O(in) = H2O(out). The enzyme catalyses nitric oxide(out) = nitric oxide(in). The catalysed reaction is CO2(out) = CO2(in). It catalyses the reaction glycerol(in) = glycerol(out). It carries out the reaction H2O2(out) = H2O2(in). The enzyme catalyses K(+)(in) = K(+)(out). The catalysed reaction is Na(+)(in) = Na(+)(out). Forms a water channel that facilitates the transport of water across cell membranes, playing a crucial role in water homeostasis in various tissues. Could also be permeable to small solutes including hydrogen peroxide, glycerol and gases such as amonnia (NH3), nitric oxide (NO) and carbon dioxide (CO2). Recruited to the ankyrin-1 complex, a multiprotein complex of the erythrocyte membrane, it could be part of a CO2 metabolon, linking facilitated diffusion of CO2 across the membrane, anion exchange of Cl(-)/HCO3(-) and interconversion of dissolved CO2 and carbonic acid in the cytosol. In vitro, it shows non-selective gated cation channel activity and may be permeable to cations like K(+) and Na(+) in vivo. This is Aquaporin-1 from Bos taurus (Bovine).